Here is a 307-residue protein sequence, read N- to C-terminus: Olfactory receptor 8K5 (307 aa).

Topologically, residues 1-25 are extracellular; it reads MGQHNLTVLTEFILMELTRRPELQI. Residue Asn5 is glycosylated (N-linked (GlcNAc...) asparagine). Residues 26–46 traverse the membrane as a helical segment; sequence PLFGVFLVIYLITVVGNLTMI. At 47-54 the chain is on the cytoplasmic side; that stretch reads ILTKLDSH. Residues 55–75 traverse the membrane as a helical segment; sequence LHTPMYFSIRHLAFVDLGNST. At 76–99 the chain is on the extracellular side; that stretch reads VICPKVLANFVVDRNTISYYACAA. Cys97 and Cys189 are disulfide-bonded. A helical membrane pass occupies residues 100-120; sequence QLAFFLMFIISEFFILSAMAY. The Cytoplasmic portion of the chain corresponds to 121 to 139; the sequence is DRYVAICNPLLYYVIMSQR. The chain crosses the membrane as a helical span at residues 140–160; sequence LCHVLVGIQYLYSTFQALMFT. Residues 161 to 197 are Extracellular-facing; that stretch reads IKIFTLTFCGSNVISHFYCDDVPLLPMLCSNAQEIEL. A helical transmembrane segment spans residues 198–217; the sequence is LSILFSVFNLISSFLIVLVS. Residues 218–237 are Cytoplasmic-facing; that stretch reads YMLILLAICQMHSAEGRKKA. The chain crosses the membrane as a helical span at residues 238–258; the sequence is FSTCGSHLTVVVVFYGSLLFM. Residues 259–271 are Extracellular-facing; the sequence is YMQPNSTHFFDTD. N-linked (GlcNAc...) asparagine glycosylation is present at Asn263. A helical transmembrane segment spans residues 272-292; the sequence is KMASVFYTLVIPMLNPLIYSL. Over 293 to 307 the chain is Cytoplasmic; sequence RNEEVKNAFYKLFEN.

This sequence belongs to the G-protein coupled receptor 1 family.

The protein resides in the cell membrane. In terms of biological role, odorant receptor. The chain is Olfactory receptor 8K5 (OR8K5) from Homo sapiens (Human).